The primary structure comprises 257 residues: Indole-3-glycerol phosphate synthase (257 aa).

This sequence belongs to the TrpC family.

The catalysed reaction is 1-(2-carboxyphenylamino)-1-deoxy-D-ribulose 5-phosphate + H(+) = (1S,2R)-1-C-(indol-3-yl)glycerol 3-phosphate + CO2 + H2O. The protein operates within amino-acid biosynthesis; L-tryptophan biosynthesis; L-tryptophan from chorismate: step 4/5. This chain is Indole-3-glycerol phosphate synthase, found in Phenylobacterium zucineum (strain HLK1).